The following is an 88-amino-acid chain: Long neurotoxin 20 (88 aa).

Residues 1–21 (MKTLLLTLVVVTIVCLDLGNS) form the signal peptide. 5 disulfides stabilise this stretch: cysteine 24–cysteine 42, cysteine 35–cysteine 63, cysteine 48–cysteine 52, cysteine 67–cysteine 78, and cysteine 79–cysteine 84.

The protein belongs to the three-finger toxin family. Long-chain subfamily. Type II alpha-neurotoxin sub-subfamily. In terms of tissue distribution, expressed by the venom gland.

The protein localises to the secreted. In terms of biological role, binds with high affinity to muscular (alpha-1/CHRNA1) and neuronal (alpha-7/CHRNA7) nicotinic acetylcholine receptor (nAChR) and inhibits acetylcholine from binding to the receptor, thereby impairing neuromuscular and neuronal transmission. The protein is Long neurotoxin 20 of Drysdalia coronoides (White-lipped snake).